The sequence spans 428 residues: Probable anion transporter 6 (428 aa).

A signal peptide spans 1 to 22 (MKFPKRYAIVLLTFMCTNVCYI). A run of 11 helical transmembrane segments spans residues 47 to 67 (MILSMFYYGYVLSQIPGGWAA), 74 to 94 (LVLLLSFVLWSSICAVVPLDP), 98 to 118 (ILLVLSRLLVGVAQGLIFPSI), 137 to 157 (LTTSGMYLGAACGMLLLPSLV), 164 to 184 (SVFSVEAMLGVAWLLIWFKFA), 221 to 241 (ILFSLPIWAIVVNNFTFHYAL), 269 to 289 (LPYLNMFLFSNIGGVLADHLI), 301 to 321 (KLLNTVGFVVSAIALMALPLF), 327 to 347 (AIFCSSVSLGFLALGRAGFAV), 356 to 376 (FAGIVMGISNTAGTLAGIVGV), and 401 to 421 (TVFFVPGYLCIFSSFIFLIFS).

It belongs to the major facilitator superfamily. Sodium/anion cotransporter (TC 2.A.1.14) family.

The protein resides in the cell membrane. Its function is as follows. Probable anion transporter. In Oryza sativa subsp. japonica (Rice), this protein is Probable anion transporter 6 (PHT4;6).